Reading from the N-terminus, the 365-residue chain is Peptide chain release factor 2 (365 aa).

The residue at position 252 (Gln-252) is an N5-methylglutamine.

This sequence belongs to the prokaryotic/mitochondrial release factor family. Post-translationally, methylated by PrmC. Methylation increases the termination efficiency of RF2.

It is found in the cytoplasm. Its function is as follows. Peptide chain release factor 2 directs the termination of translation in response to the peptide chain termination codons UGA and UAA. The protein is Peptide chain release factor 2 of Shewanella baltica (strain OS223).